An 806-amino-acid chain; its full sequence is Transitional endoplasmic reticulum ATPase (806 aa).

Ala2 is modified (N-acetylalanine). A phosphoserine mark is found at Ser3 and Ser7. A Glycyl lysine isopeptide (Lys-Gly) (interchain with G-Cter in SUMO2) cross-link involves residue Lys8. A Phosphoserine modification is found at Ser13. A Glycyl lysine isopeptide (Lys-Gly) (interchain with G-Cter in SUMO2) cross-link involves residue Lys18. Ser37 bears the Phosphoserine mark. Residue 247–253 (PGTGKTL) participates in ATP binding. Lys315 bears the N6,N6,N6-trimethyllysine; by VCPKMT mark. The ATP site is built by Asn348 and His384. Thr436 is modified (phosphothreonine). Ser462 carries the post-translational modification Phosphoserine. Lys502 and Lys505 each carry N6-acetyllysine. ATP is bound at residue 521–526 (GCGKTL). Position 668 is an N6-acetyllysine; alternate (Lys668). Lys668 is subject to N6-succinyllysine; alternate. Phosphoserine is present on Ser702. Residues 708–727 (RRERERQTNPSAMEVEEDDP) form a disordered region. Lys754 is modified (N6-acetyllysine). The disordered stretch occupies residues 768–806 (FGSFRFPSGNQGGAGPSQGSGGGTGGSVYTEDNDDDLYG). Residues Ser770, Ser775, and Ser787 each carry the phosphoserine modification. The segment covering 777–793 (NQGGAGPSQGSGGGTGG) has biased composition (gly residues). The interaction with UBXN6 stretch occupies residues 797–806 (TEDNDDDLYG). The PIM motif signature appears at 802–806 (DDLYG). Tyr805 is modified (phosphotyrosine).

Belongs to the AAA ATPase family. As to quaternary structure, homohexamer. Forms a ring-shaped particle of 12.5 nm diameter, that displays 6-fold radial symmetry. Part of a ternary complex containing STX5A, NSFL1C and VCP. NSFL1C forms a homotrimer that binds to one end of a VCP homohexamer. The complex binds to membranes enriched in phosphatidylethanolamine-containing lipids and promotes Golgi membrane fusion. Binds to a heterodimer of NPLOC4 and UFD1, binding to this heterodimer inhibits Golgi-membrane fusion. Interaction with VCIP135 leads to dissociation of the complex via ATP hydrolysis by VCP. Part of a ternary complex containing NPLOC4, UFD1 and VCP. Interacts with NSFL1C-like protein p37; the complex has membrane fusion activity and is required for Golgi and endoplasmic reticulum biogenesis. Interacts with SELENOS and SYVN1, as well as with DERL1 (via SHP-box motif), DERL2 and DERL3; which probably transfer misfolded proteins from the ER to VCP. Interacts with SVIP and forms a complex with SVIP and DERL1. Component of a complex required to couple retrotranslocation, ubiquitination and deglycosylation composed of NGLY1, SAKS1, AMFR, VCP and RAD23B. Part of a complex composed of STUB1/CHIP, VCP/p97, CHRNA3, and UBXN2A that modulates the ubiquitination and endoplasmic reticulum-associated degradation (ERAD) of CHRNA3. Within the complex UBXN2A acts as a scaffold protein required for the interaction of CHRNA3 with VCP/p97, this interaction also inhibits CHRNA3 ubiquitination by STUB1/CHIP and subsequently ERAD. Interacts with UBXN2A (via UBX domain); the interaction is required for the interaction of CHRNA3 in the STUB1-VCP-UBXN2A complex. Directly interacts with UBXN4 and RNF19A. Interacts with CASR. Interacts with UBE4B and YOD1. Interacts with clathrin. Interacts with RNF103. Interacts with TRIM13 and TRIM21. Component of a VCP/p97-AMFR/gp78 complex that participates in the final step of the endoplasmic reticulum-associated degradation (ERAD) of HMGCR. Interacts directly with AMFR/gp78 (via its VIM). Interacts with RHBDD1 (via C-terminal domain). Interacts with SPRTN; leading to recruitment to stalled replication forks. Interacts with WASHC5. Interacts with UBOX5. Interacts (via N-terminus) with UBXN7, UBXN8, and probably several other UBX domain-containing proteins (via UBX domains); the interactions are mutually exclusive with VIM-dependent interactions such as those with AMFR and SELENOS. Forms a complex with UBQLN1 and UBXN4. Interacts (via the PIM motif) with RNF31 (via the PUB domain). Interacts with RIGI and RNF125; interaction takes place when RIGI is ubiquitinated via 'Lys-63'-linked ubiquitin on its CARD domains, leading to recruit RNF125 and promote ubiquitination and degradation of RIGI. Interacts with BAG6. Interacts with UBXN10. Interacts with UBXN6; the interaction with UBXN6 is direct and competitive with UFD1. Forms a ternary complex with CAV1 and UBXN6. Interacts with PLAA, UBXN6 and YOD1; may form a complex involved in macroautophagy. Interacts with ANKZF1. Interacts with ubiquitin-binding protein FAF1. Interacts with ZFAND2B (via VIM motif); the interaction is direct. Interacts with ZFAND1 (via its ubiquitin-like region); this interaction occurs in an arsenite-dependent manner. Interacts with CCDC47. Interacts with UBAC2. Interacts with LMBR1L. Interacts with ATXN3. Interacts with TEX264; bridging VCP to covalent DNA-protein cross-links (DPCs). Interacts with FBXL4. Phosphorylated by tyrosine kinases in response to T-cell antigen receptor activation. Phosphorylated in mitotic cells. In terms of processing, ISGylated. Post-translationally, methylation at Lys-315 catalyzed by VCPKMT is increased in the presence of ASPSCR1. Lys-315 methylation may decrease ATPase activity.

The protein resides in the cytoplasm. It is found in the cytosol. The protein localises to the endoplasmic reticulum. Its subcellular location is the nucleus. It localises to the stress granule. The enzyme catalyses ATP + H2O = ADP + phosphate + H(+). Functionally, necessary for the fragmentation of Golgi stacks during mitosis and for their reassembly after mitosis. Involved in the formation of the transitional endoplasmic reticulum (tER). The transfer of membranes from the endoplasmic reticulum to the Golgi apparatus occurs via 50-70 nm transition vesicles which derive from part-rough, part-smooth transitional elements of the endoplasmic reticulum (tER). Vesicle budding from the tER is an ATP-dependent process. The ternary complex containing UFD1, VCP and NPLOC4 binds ubiquitinated proteins and is necessary for the export of misfolded proteins from the ER to the cytoplasm, where they are degraded by the proteasome. The NPLOC4-UFD1-VCP complex regulates spindle disassembly at the end of mitosis and is necessary for the formation of a closed nuclear envelope. Regulates E3 ubiquitin-protein ligase activity of RNF19A. Component of the VCP/p97-AMFR/gp78 complex that participates in the final step of the sterol-mediated ubiquitination and endoplasmic reticulum-associated degradation (ERAD) of HMGCR. Mediates the endoplasmic reticulum-associated degradation of CHRNA3 in cortical neurons as part of the STUB1-VCP-UBXN2A complex. Involved in endoplasmic reticulum stress-induced pre-emptive quality control, a mechanism that selectively attenuates the translocation of newly synthesized proteins into the endoplasmic reticulum and reroutes them to the cytosol for proteasomal degradation. Involved in clearance process by mediating G3BP1 extraction from stress granules. Also involved in DNA damage response: recruited to double-strand breaks (DSBs) sites in a RNF8- and RNF168-dependent manner and promotes the recruitment of TP53BP1 at DNA damage sites. Recruited to stalled replication forks by SPRTN: may act by mediating extraction of DNA polymerase eta (POLH) to prevent excessive translesion DNA synthesis and limit the incidence of mutations induced by DNA damage. Together with SPRTN metalloprotease, involved in the repair of covalent DNA-protein cross-links (DPCs) during DNA synthesis. Involved in interstrand cross-link repair in response to replication stress by mediating unloading of the ubiquitinated CMG helicase complex. Mediates extraction of PARP1 trapped to chromatin: recognizes and binds ubiquitinated PARP1 and promotes its removal. Required for cytoplasmic retrotranslocation of stressed/damaged mitochondrial outer-membrane proteins and their subsequent proteasomal degradation. Essential for the maturation of ubiquitin-containing autophagosomes and the clearance of ubiquitinated protein by autophagy. Acts as a negative regulator of type I interferon production by interacting with RIGI: interaction takes place when RIGI is ubiquitinated via 'Lys-63'-linked ubiquitin on its CARD domains, leading to recruit RNF125 and promote ubiquitination and degradation of RIGI. May play a role in the ubiquitin-dependent sorting of membrane proteins to lysosomes where they undergo degradation. May more particularly play a role in caveolins sorting in cells. By controlling the steady-state expression of the IGF1R receptor, indirectly regulates the insulin-like growth factor receptor signaling pathway. This chain is Transitional endoplasmic reticulum ATPase (VCP), found in Homo sapiens (Human).